Consider the following 232-residue polypeptide: 2,3,4,5-tetrahydropyridine-2,6-dicarboxylate N-acetyltransferase (232 aa).

This sequence belongs to the transferase hexapeptide repeat family. DapH subfamily.

It carries out the reaction (S)-2,3,4,5-tetrahydrodipicolinate + acetyl-CoA + H2O = L-2-acetamido-6-oxoheptanedioate + CoA. It functions in the pathway amino-acid biosynthesis; L-lysine biosynthesis via DAP pathway; LL-2,6-diaminopimelate from (S)-tetrahydrodipicolinate (acetylase route): step 1/3. Its function is as follows. Catalyzes the transfer of an acetyl group from acetyl-CoA to tetrahydrodipicolinate. The chain is 2,3,4,5-tetrahydropyridine-2,6-dicarboxylate N-acetyltransferase from Streptococcus gordonii (strain Challis / ATCC 35105 / BCRC 15272 / CH1 / DL1 / V288).